The primary structure comprises 970 residues: Transcriptional activator protein DAL81 (970 aa).

Disordered regions lie at residues 1–44 (MDPH…NHDI), 64–95 (NILREKGGSQQQQHQQQQQQQQQQQQQQQQQS), and 118–140 (DNVSNSADHNGSNSNNNNNNNDI). 3 stretches are compositionally biased toward low complexity: residues 15-41 (TKSVKATTKNSSTNNNVNSNNSNNNSN), 73-94 (QQQQHQQQQQQQQQQQQQQQQQ), and 121-140 (SNSADHNGSNSNNNNNNNDI). The segment at residues 150–179 (CNQCRLKKTKCNYFPDLGNCLECETSRTKC) is a DNA-binding region (zn(2)-C6 fungal-type). Positions 807–823 (SFPNGTTSTTTPVNPTS) are enriched in low complexity. A disordered region spans residues 807 to 970 (SFPNGTTSTT…VTINTRETPL (164 aa)). 2 stretches are compositionally biased toward polar residues: residues 824 to 836 (RQTQLESQGSPAI) and 858 to 870 (KTSQSSPNVTPSH). At Ser-833 the chain carries Phosphoserine. Positions 875-894 (PPSNTSSPRVNSSTNVNSNT) are enriched in low complexity. The segment covering 895–906 (QMNASPLTSINE) has biased composition (polar residues). Over residues 907 to 938 (TRQESGDAADEKTAGRERTANEESSTELKDDN) the composition is skewed to basic and acidic residues. Polar residues-rich tracts occupy residues 939–954 (PNSNQETSATGNQTIK) and 961–970 (VTINTRETPL).

It is found in the nucleus. Its function is as follows. Positive regulation of genes required for catabolism of GABA (UGA4, UGA1, and UGA2), urea (DUR1 and DUR2), arginine and allantoin. This is Transcriptional activator protein DAL81 (DAL81) from Saccharomyces cerevisiae (strain ATCC 204508 / S288c) (Baker's yeast).